We begin with the raw amino-acid sequence, 379 residues long: Putative acetyl-CoA C-acetyltransferase VraB (379 aa).

The active-site Acyl-thioester intermediate is Cys-86. The active-site Proton acceptor is His-338.

The protein belongs to the thiolase-like superfamily. Thiolase family.

The protein is Putative acetyl-CoA C-acetyltransferase VraB (vraB) of Staphylococcus aureus (strain MRSA252).